We begin with the raw amino-acid sequence, 197 residues long: Probable GTP-binding protein EngB (197 aa).

Residues 22-195 (GFPEIGLAGR…WQWIEAHTVG (174 aa)) form the EngB-type G domain. GTP-binding positions include 30 to 37 (GRSNVGKS), 57 to 61 (GKTQT), 75 to 78 (DVPG), 142 to 145 (TKSD), and 174 to 176 (FSA). Positions 37 and 59 each coordinate Mg(2+).

Belongs to the TRAFAC class TrmE-Era-EngA-EngB-Septin-like GTPase superfamily. EngB GTPase family. Requires Mg(2+) as cofactor.

Functionally, necessary for normal cell division and for the maintenance of normal septation. The polypeptide is Probable GTP-binding protein EngB (Lactiplantibacillus plantarum (strain ATCC BAA-793 / NCIMB 8826 / WCFS1) (Lactobacillus plantarum)).